The following is a 94-amino-acid chain: MNIKPLADRVVLKPIEAEEKTAFGIIVPDTAKEKPQQGEVVAVGIGRLLDNGERAALEVAVGDRVIYSKYSGTEIKIEGKEYLILNERDILAKL.

The protein belongs to the GroES chaperonin family. In terms of assembly, heptamer of 7 subunits arranged in a ring. Interacts with the chaperonin GroEL.

Its subcellular location is the cytoplasm. Together with the chaperonin GroEL, plays an essential role in assisting protein folding. The GroEL-GroES system forms a nano-cage that allows encapsulation of the non-native substrate proteins and provides a physical environment optimized to promote and accelerate protein folding. GroES binds to the apical surface of the GroEL ring, thereby capping the opening of the GroEL channel. This Heliobacterium modesticaldum (strain ATCC 51547 / Ice1) protein is Co-chaperonin GroES.